The following is a 144-amino-acid chain: MAVLALLFCLATFPSCILSQVQLKESGPGLVAPSQSLSITCTVSGFSLTGYGVNWVRQPPGKGLEWLGTIWGNGSTDYNSTLKSRLTITKDNSKSQVFLKMNSLQTDDTARYYCASVSIYYYGRSDKYFTLDYWGQGTSVTVSS.

An N-terminal signal peptide occupies residues 1–19 (MAVLALLFCLATFPSCILS). Positions 20 to 130 (QVQLKESGPG…YYGRSDKYFT (111 aa)) constitute an Ig-like domain.

The polypeptide is Ig heavy chain V region MOPC 141 (Mus musculus (Mouse)).